The primary structure comprises 322 residues: Phthalate dioxygenase reductase (322 aa).

Positions 7 to 109 (DGFLRLKIAS…SLPRNEFPLD (103 aa)) constitute an FAD-binding FR-type domain. FMN contacts are provided by residues 56-57 (RT), 73-75 (AVK), 81-84 (RGGS), threonine 125, and phenylalanine 226. The region spanning 239–322 (FTVRLSRSGT…AKSAELVLDL (84 aa)) is the 2Fe-2S ferredoxin-type domain. Cysteine 273 provides a ligand contact to [2Fe-2S] cluster. Serine 275 is an FMN binding site. 3 residues coordinate [2Fe-2S] cluster: cysteine 278, cysteine 281, and cysteine 309.

This sequence belongs to the PDR/VanB family. In terms of assembly, monomer. Requires FMN as cofactor.

In terms of biological role, component of the electron transfer chain involved in pyridine nucleotide-dependent dihydroxylation of phthalate. Utilizes FMN to mediate electron transfer from the two-electron donor, NADH, to the one-electron acceptor, (2Fe-2S). This is Phthalate dioxygenase reductase (ophA1) from Burkholderia cepacia (Pseudomonas cepacia).